A 534-amino-acid chain; its full sequence is Glucomannan 4-beta-mannosyltransferase 2 (534 aa).

Residues valine 36–leucine 56 traverse the membrane as a helical segment. Aspartate 136 is a catalytic residue. Aspartate 195 and aspartate 197 together coordinate substrate. Residue aspartate 289 is part of the active site. 4 helical membrane-spanning segments follow: residues isoleucine 368–valine 388, isoleucine 404–phenylalanine 426, leucine 483–valine 503, and tyrosine 509–glycine 529.

Belongs to the glycosyltransferase 2 family. Plant cellulose synthase-like A subfamily.

The protein localises to the golgi apparatus membrane. The catalysed reaction is GDP-mannose + (glucomannan)n = GDP + (glucomannan)n+1.. Possesses glucomannan synthase and mannan synthase activities in vitro. Mannan synthase consists of a 4-beta-mannosyltransferase activity on mannan using GDP-mannose. The beta-1,4-mannan product is the backbone for galactomannan synthesis by galactomannan galactosyltransferase. Galactomannan is a noncellulosic polysaccharides of plant cell wall. This is Glucomannan 4-beta-mannosyltransferase 2 from Arabidopsis thaliana (Mouse-ear cress).